We begin with the raw amino-acid sequence, 336 residues long: Glyceraldehyde-3-phosphate dehydrogenase (336 aa).

Residues 12–13, D34, and R79 contribute to the NAD(+) site; that span reads RI. Residues 150–152, T181, 210–211, and R233 each bind D-glyceraldehyde 3-phosphate; these read SCT and TG. C151 functions as the Nucleophile in the catalytic mechanism. N315 serves as a coordination point for NAD(+).

It belongs to the glyceraldehyde-3-phosphate dehydrogenase family. Homotetramer.

The protein localises to the cytoplasm. The catalysed reaction is D-glyceraldehyde 3-phosphate + phosphate + NAD(+) = (2R)-3-phospho-glyceroyl phosphate + NADH + H(+). The protein operates within carbohydrate degradation; glycolysis; pyruvate from D-glyceraldehyde 3-phosphate: step 1/5. In terms of biological role, involved in osmoadaptation. This chain is Glyceraldehyde-3-phosphate dehydrogenase (gpdA), found in Emericella nidulans (strain FGSC A4 / ATCC 38163 / CBS 112.46 / NRRL 194 / M139) (Aspergillus nidulans).